The primary structure comprises 86 residues: Small ribosomal subunit protein uS15 (86 aa).

Residues Met-1 to Glu-10 show a composition bias toward polar residues. The tract at residues Met-1 to Ser-21 is disordered.

It belongs to the universal ribosomal protein uS15 family. Part of the 30S ribosomal subunit. Forms a bridge to the 50S subunit in the 70S ribosome, contacting the 23S rRNA.

Functionally, one of the primary rRNA binding proteins, it binds directly to 16S rRNA where it helps nucleate assembly of the platform of the 30S subunit by binding and bridging several RNA helices of the 16S rRNA. Its function is as follows. Forms an intersubunit bridge (bridge B4) with the 23S rRNA of the 50S subunit in the ribosome. The chain is Small ribosomal subunit protein uS15 from Xylella fastidiosa (strain 9a5c).